Reading from the N-terminus, the 120-residue chain is UPF0102 protein HSM_1206 (120 aa).

This sequence belongs to the UPF0102 family.

The chain is UPF0102 protein HSM_1206 from Histophilus somni (strain 2336) (Haemophilus somnus).